Reading from the N-terminus, the 126-residue chain is Fluoride-specific ion channel FluC (126 aa).

Transmembrane regions (helical) follow at residues 3–23 (MILA…LTGV), 39–59 (TVNV…AHVW), 71–91 (VGVL…ALLV), and 101–121 (AYVA…LALI). 2 residues coordinate Na(+): Gly75 and Thr78.

It belongs to the fluoride channel Fluc/FEX (TC 1.A.43) family.

It is found in the cell inner membrane. It catalyses the reaction fluoride(in) = fluoride(out). Its activity is regulated as follows. Na(+) is not transported, but it plays an essential structural role and its presence is essential for fluoride channel function. Its function is as follows. Fluoride-specific ion channel. Important for reducing fluoride concentration in the cell, thus reducing its toxicity. The chain is Fluoride-specific ion channel FluC from Rhodospirillum centenum (strain ATCC 51521 / SW).